Consider the following 237-residue polypeptide: Ribonuclease PH (237 aa).

Phosphate contacts are provided by residues Arg-86 and 124–126; that span reads GTR.

Belongs to the RNase PH family. In terms of assembly, homohexameric ring arranged as a trimer of dimers.

The enzyme catalyses tRNA(n+1) + phosphate = tRNA(n) + a ribonucleoside 5'-diphosphate. In terms of biological role, phosphorolytic 3'-5' exoribonuclease that plays an important role in tRNA 3'-end maturation. Removes nucleotide residues following the 3'-CCA terminus of tRNAs; can also add nucleotides to the ends of RNA molecules by using nucleoside diphosphates as substrates, but this may not be physiologically important. Probably plays a role in initiation of 16S rRNA degradation (leading to ribosome degradation) during starvation. This is Ribonuclease PH from Myxococcus xanthus (strain DK1622).